Reading from the N-terminus, the 503-residue chain is Glucosaminyl-phosphatidylinositol-acyltransferase PIGW (503 aa).

The Lumenal segment spans residues 1-21 (MSQKQLKEAFVRNLSGTSVLE). A glycan (N-linked (GlcNAc...) asparagine) is linked at N13. The chain crosses the membrane as a helical span at residues 22-42 (VTQGLCFPAFCILCRGLWIIF). The Cytoplasmic segment spans residues 43–48 (SQHVCS). The helical transmembrane segment at 49–71 (FSNTWSTRFLMDFVVLIVPLVIT) threads the bilayer. At 72-74 (LTV) the chain is on the lumenal side. The chain crosses the membrane as a helical span at residues 75–97 (LSSFILLENLTVIVWGAWLLYQI). The Cytoplasmic segment spans residues 98 to 131 (YHRRTCYAKVPVQKVFANFLKISLESEYNPAITC). Residues 132–152 (YRVINSVFTAIAILAVDFPLF) traverse the membrane as a helical segment. The Lumenal portion of the chain corresponds to 153–160 (PRRFAKTE). A helical transmembrane segment spans residues 161 to 181 (LYGTGAMDFGVGGFIFGAAMV). At 182–201 (CPEVRRKSIEESRFNYLRKS) the chain is on the cytoplasmic side. Residues 202-222 (LYSVWPLVFLGMGRLVIIKSI) form a helical membrane-spanning segment. The Lumenal segment spans residues 223-236 (GYQEHSTEYGIHWN). Residues 237–257 (FFFTIIVVRLVTSLLLIIFPL) traverse the membrane as a helical segment. Residues 258-259 (NK) are Cytoplasmic-facing. The chain crosses the membrane as a helical span at residues 260–280 (SWIVAVSITVVYQLALDYTPL). Topologically, residues 281-304 (KRILLYGTDGSGTRVGFLNANREG) are lumenal. The helical transmembrane segment at 305-325 (IISTLGYVTIHMAGVQTGLYV) threads the bilayer. Residues 326-339 (LKGRAQVRDWIKAT) are Cytoplasmic-facing. A helical transmembrane segment spans residues 340–360 (CWVFSVAVGFFISLHIVQVNI). Residues 361 to 380 (EAVSRRMANLAFCLWVVASS) lie on the Lumenal side of the membrane. Residues 381–401 (LMLLSCLLLSGIILSFAQFLI) traverse the membrane as a helical segment. The Cytoplasmic portion of the chain corresponds to 402-447 (KGSLVPCSWKLIQSPTTHKNHSESLILEAEKNQPSLCLITALNRNQ). Phosphoserine is present on S415. Residues 448 to 468 (LFFFLLSNITTGLINLTMDTL) form a helical membrane-spanning segment. At 469 to 472 (HTGA) the chain is on the lumenal side. The chain crosses the membrane as a helical span at residues 473 to 493 (LWTLVVLSIYMFTNCLVIYVL). The Cytoplasmic portion of the chain corresponds to 494–503 (DLQGKTIKFW).

It belongs to the PIGW family.

Its subcellular location is the endoplasmic reticulum membrane. It functions in the pathway glycolipid biosynthesis; glycosylphosphatidylinositol-anchor biosynthesis. In terms of biological role, acyltransferase that catalyzes the acyl transfer from an acyl-CoA at the 2-OH position of the inositol ring of glucosaminyl phosphatidylinositol (GlcN-PI) to generate GlcN-(acyl)PI and participates in the fourth step of GPI-anchor biosynthesi. Required for the transport of GPI-anchored proteins to the plasma membrane. Acetylation during GPI-anchor biosynthesis is not essential for the subsequent mannosylation and is usually removed soon after the attachment of GPIs to proteins. The chain is Glucosaminyl-phosphatidylinositol-acyltransferase PIGW from Mus musculus (Mouse).